A 322-amino-acid chain; its full sequence is MLELAVQKVVVHPLVLLSVVDHFNRIGKVGNQKRVVGVLLGSWQKKVLDVSNSFAVPFDEDDKDDSVWFLDHDYLENMYGMFKKVNARERIVGWYHTGPKLHKNDIAINELMKRYCPNSVLVIIDVKPKDLGLPTEAYISVEEVHDDGTPTSKTFEHVTSEIGAEEAEEVGVEHLLRDIKDTTVGTLSQRITNQVHGLKGLNSKLLDIRGYLEKVATGKLPINHQIIYQLQDVFNLLPDVSLQEFVKAFYLKTNDQMVVVYLASLIRSVVALHNLINNKIANRDAEKKEGQEKEDSKKDRKDDKEKEKEKSDVKKEEKKEKK.

The MPN domain occupies 9–144 (VVVHPLVLLS…TEAYISVEEV (136 aa)). A Glycyl lysine isopeptide (Lys-Gly) (interchain with G-Cter in ubiquitin) cross-link involves residue Lys-180. N6-acetyllysine is present on residues Lys-204, Lys-214, Lys-314, and Lys-315. Residues 281-322 (ANRDAEKKEGQEKEDSKKDRKDDKEKEKEKSDVKKEEKKEKK) form a disordered region.

Belongs to the peptidase M67A family. As to quaternary structure, component of the 19S proteasome regulatory particle complex. The 26S proteasome consists of a 20S core particle (CP) and two 19S regulatory subunits (RP). The regulatory particle is made of a lid composed of 9 subunits including PSMD7, a base containing 6 ATPases and few additional components. Within the complex, PSMD7 interacts with subunit PSMD4 through their respective MPN domain. Interacts with TRIM5.

Its function is as follows. Component of the 26S proteasome, a multiprotein complex involved in the ATP-dependent degradation of ubiquitinated proteins. This complex plays a key role in the maintenance of protein homeostasis by removing misfolded or damaged proteins, which could impair cellular functions, and by removing proteins whose functions are no longer required. Therefore, the proteasome participates in numerous cellular processes, including cell cycle progression, apoptosis, or DNA damage repair. In Bos taurus (Bovine), this protein is 26S proteasome non-ATPase regulatory subunit 7 (PSMD7).